We begin with the raw amino-acid sequence, 153 residues long: SsrA-binding protein (153 aa).

The disordered stretch occupies residues 132 to 153 (REKDWLRERERVMKHDTRRRSD).

This sequence belongs to the SmpB family.

The protein localises to the cytoplasm. Functionally, required for rescue of stalled ribosomes mediated by trans-translation. Binds to transfer-messenger RNA (tmRNA), required for stable association of tmRNA with ribosomes. tmRNA and SmpB together mimic tRNA shape, replacing the anticodon stem-loop with SmpB. tmRNA is encoded by the ssrA gene; the 2 termini fold to resemble tRNA(Ala) and it encodes a 'tag peptide', a short internal open reading frame. During trans-translation Ala-aminoacylated tmRNA acts like a tRNA, entering the A-site of stalled ribosomes, displacing the stalled mRNA. The ribosome then switches to translate the ORF on the tmRNA; the nascent peptide is terminated with the 'tag peptide' encoded by the tmRNA and targeted for degradation. The ribosome is freed to recommence translation, which seems to be the essential function of trans-translation. This Bordetella avium (strain 197N) protein is SsrA-binding protein.